A 104-amino-acid chain; its full sequence is Turripeptide OL55-like (104 aa).

Post-translationally, contains 8 disulfide bonds. Expressed by the venom duct.

It localises to the secreted. Functionally, acts as a neurotoxin by inhibiting an ion channel. The polypeptide is Turripeptide OL55-like (Iotyrris cingulifera (Sea snail)).